We begin with the raw amino-acid sequence, 498 residues long: Phosphoethanolamine N-methyltransferase 1 (498 aa).

The S-adenosyl-L-homocysteine site is built by G68, R73, D89, D115, V116, and N134. Residues S167, S172, G173, R177, and Y184 each contribute to the phosphocholine site. N-methylethanolamine phosphate-binding positions include 253–254 and Y262; that span reads QY. Y262 contributes to the phosphocholine binding site. S-adenosyl-L-homocysteine is bound by residues V271, S272, G298, D320, D346, C347, and R363. Y394, Y408, R412, Y414, and K480 together coordinate phosphocholine. N-methylethanolamine phosphate contacts are provided by residues Y394, Y408, 412 to 414, and K480; that span reads RGY.

Belongs to the class I-like SAM-binding methyltransferase superfamily. PEAMT family.

The catalysed reaction is phosphoethanolamine + S-adenosyl-L-methionine = N-methylethanolamine phosphate + S-adenosyl-L-homocysteine + H(+). It catalyses the reaction N-methylethanolamine phosphate + S-adenosyl-L-methionine = N,N-dimethylethanolamine phosphate + S-adenosyl-L-homocysteine + H(+). It carries out the reaction N,N-dimethylethanolamine phosphate + S-adenosyl-L-methionine = phosphocholine + S-adenosyl-L-homocysteine + H(+). It participates in phospholipid metabolism; phosphatidylcholine biosynthesis; phosphocholine from phosphoethanolamine: step 1/1. With respect to regulation, inhibited by phosphatidic acid. In terms of biological role, involved in phosphocholine biosynthesis. Catalyzes the N-methylation of phosphoethanolamine, phosphomonomethylethanolamine and phosphodimethylethanolamine, the three methylation steps required to convert phosphoethanolamine to phosphocholine (PC). The chain is Phosphoethanolamine N-methyltransferase 1 from Triticum aestivum (Wheat).